The primary structure comprises 323 residues: 1D-myo-inositol 2-acetamido-2-deoxy-alpha-D-glucopyranoside deacetylase 1 (323 aa).

3 residues coordinate Zn(2+): His-30, Asp-33, and His-165.

It belongs to the MshB deacetylase family. Zn(2+) is required as a cofactor.

The catalysed reaction is 1D-myo-inositol 2-acetamido-2-deoxy-alpha-D-glucopyranoside + H2O = 1D-myo-inositol 2-amino-2-deoxy-alpha-D-glucopyranoside + acetate. Catalyzes the deacetylation of 1D-myo-inositol 2-acetamido-2-deoxy-alpha-D-glucopyranoside (GlcNAc-Ins) in the mycothiol biosynthesis pathway. The polypeptide is 1D-myo-inositol 2-acetamido-2-deoxy-alpha-D-glucopyranoside deacetylase 1 (Catenulispora acidiphila (strain DSM 44928 / JCM 14897 / NBRC 102108 / NRRL B-24433 / ID139908)).